The sequence spans 231 residues: Endonuclease NucS (231 aa).

It belongs to the NucS endonuclease family.

The protein resides in the cytoplasm. In terms of biological role, cleaves both 3' and 5' ssDNA extremities of branched DNA structures. The protein is Endonuclease NucS of Beutenbergia cavernae (strain ATCC BAA-8 / DSM 12333 / CCUG 43141 / JCM 11478 / NBRC 16432 / NCIMB 13614 / HKI 0122).